Here is a 168-residue protein sequence, read N- to C-terminus: Small ribosomal subunit protein uS9 (168 aa).

Over residues M1–A11 the composition is skewed to low complexity. Residues M1–R36 form a disordered region.

The protein belongs to the universal ribosomal protein uS9 family.

The sequence is that of Small ribosomal subunit protein uS9 from Pseudarthrobacter chlorophenolicus (strain ATCC 700700 / DSM 12829 / CIP 107037 / JCM 12360 / KCTC 9906 / NCIMB 13794 / A6) (Arthrobacter chlorophenolicus).